The primary structure comprises 201 residues: Large ribosomal subunit protein bL9 (201 aa).

Over residues 150 to 165 (EAERQAAGEDLTQRRD) the composition is skewed to basic and acidic residues. Residues 150-201 (EAERQAAGEDLTQRRDDEEEEAVEAAEFFESEELAPGDEEEEAAGEEEDAKE) are disordered. Residues 166 to 201 (DEEEEAVEAAEFFESEELAPGDEEEEAAGEEEDAKE) show a composition bias toward acidic residues.

Belongs to the bacterial ribosomal protein bL9 family.

Functionally, binds to the 23S rRNA. The chain is Large ribosomal subunit protein bL9 from Parvibaculum lavamentivorans (strain DS-1 / DSM 13023 / NCIMB 13966).